Here is a 225-residue protein sequence, read N- to C-terminus: Translation initiation factor 6 (225 aa).

The protein belongs to the eIF-6 family.

In terms of biological role, binds to the 50S ribosomal subunit and prevents its association with the 30S ribosomal subunit to form the 70S initiation complex. The sequence is that of Translation initiation factor 6 from Hyperthermus butylicus (strain DSM 5456 / JCM 9403 / PLM1-5).